The chain runs to 1918 residues: Diacylglycerol kinase eta (1918 aa).

Residues 1–10 show a composition bias toward basic and acidic residues; it reads MAHLKLDTLH. A disordered region spans residues 1-37; sequence MAHLKLDTLHVQRSPRGSRRSSPSSGRSSACSSGSIS. Positions 20–37 are enriched in low complexity; the sequence is RSSPSSGRSSACSSGSIS. In terms of domain architecture, PH spans 82–175; that stretch reads AIIKEGFLLK…WLGGLKTATA (94 aa). 2 consecutive Phorbol-ester/DAG-type zinc fingers follow at residues 195-245 and 268-319; these read HHHW…IANC and PHQW…AVAC. The 137-residue stretch at 350–486 folds into the DAGKc domain; the sequence is GNFSPLLVFV…DRWSIMVFEK (137 aa). 4 disordered regions span residues 783–805, 1017–1067, 1177–1212, and 1380–1399; these read GANIDDAGNRLSPCSDGGENTPT, TTLC…DDNP, PNTILTTSTSPTKKSGHGQDISVVVRPPTPLRGDSI, and ERDKEERGGKDKDKTPTEEA. A compositionally biased stretch (polar residues) spans 1177-1189; that stretch reads PNTILTTSTSPTK. An SAM domain is found at 1855 to 1918; the sequence is WSVNEVVTWL…LQAIKDLSEN (64 aa).

Belongs to the eukaryotic diacylglycerol kinase family.

It is found in the cytoplasm. The enzyme catalyses a 1,2-diacyl-sn-glycerol + ATP = a 1,2-diacyl-sn-glycero-3-phosphate + ADP + H(+). Its function is as follows. Phosphorylates diacylglycerol (DAG) to generate phosphatidic acid (PA). This is Diacylglycerol kinase eta from Drosophila erecta (Fruit fly).